The primary structure comprises 443 residues: MSPSVAELLLQRLERTPPGPEGGLCSLEAAAALGLDHQTLVGAVKSLQALGEVIEAETRATTRWELSAEGEEVLRDGSPEVRLFRSVPSEGLPQSDAMKLPGAQVGFSKAMANKWLRLDKGAPGGPRIFRAVDAVQDVVQSSLRQVQEGNGGSLSERERTDLKRRKLLLEVTLKSYWIRKGSAFSTAVVRQETDLTPEMIATGSWRKLPFKAYNFSALGLPPTCGHLHPLLKVRSQLRQIFLEMGFTEMPTDNFVESSFWNFDALFQPQQHPARDQHDTFFLQDPAEAPELPANYMARVKKVHSQGGYGSQGYKYEWKVEEARKNLLRTHTTSASARALYHLARQGKFTPVKYFSIDRVFRNESLDATHLAEFHQVEGVVADRGLTLGHLMGTLQQFFTKLGISKLRFKPAYNPYTEPSMEVFSYHEGLKKWVEVGNSGVFRS.

Residues Thr332, 375-377, and Tyr415 each bind L-phenylalanine; that span reads QVE. Position 417 (Glu417) interacts with Mg(2+). Position 441 (Phe441) interacts with L-phenylalanine.

Belongs to the class-II aminoacyl-tRNA synthetase family. Phe-tRNA synthetase alpha subunit type 2 subfamily. In terms of assembly, heterotetramer; dimer of two heterodimers formed by FARSA and FARSB. It depends on Mg(2+) as a cofactor.

The protein resides in the cytoplasm. It catalyses the reaction tRNA(Phe) + L-phenylalanine + ATP = L-phenylalanyl-tRNA(Phe) + AMP + diphosphate + H(+). This chain is Phenylalanine--tRNA ligase alpha subunit (FARSA), found in Gallus gallus (Chicken).